A 110-amino-acid chain; its full sequence is Iron-sulfur cluster assembly protein CyaY (110 aa).

The protein belongs to the frataxin family.

Functionally, involved in iron-sulfur (Fe-S) cluster assembly. May act as a regulator of Fe-S biogenesis. This is Iron-sulfur cluster assembly protein CyaY from Pseudomonas syringae pv. tomato (strain ATCC BAA-871 / DC3000).